A 251-amino-acid polypeptide reads, in one-letter code: Triosephosphate isomerase (251 aa).

Substrate is bound at residue 9 to 11 (NWK). Histidine 95 functions as the Electrophile in the catalytic mechanism. Glutamate 167 acts as the Proton acceptor in catalysis. Residues glycine 173, serine 213, and 234–235 (GG) each bind substrate.

It belongs to the triosephosphate isomerase family. In terms of assembly, homodimer.

The protein resides in the cytoplasm. It catalyses the reaction D-glyceraldehyde 3-phosphate = dihydroxyacetone phosphate. It participates in carbohydrate biosynthesis; gluconeogenesis. Its pathway is carbohydrate degradation; glycolysis; D-glyceraldehyde 3-phosphate from glycerone phosphate: step 1/1. In terms of biological role, involved in the gluconeogenesis. Catalyzes stereospecifically the conversion of dihydroxyacetone phosphate (DHAP) to D-glyceraldehyde-3-phosphate (G3P). The sequence is that of Triosephosphate isomerase from Trichlorobacter lovleyi (strain ATCC BAA-1151 / DSM 17278 / SZ) (Geobacter lovleyi).